The primary structure comprises 344 residues: N-acetyl-gamma-glutamyl-phosphate reductase (344 aa).

C148 is a catalytic residue.

It belongs to the NAGSA dehydrogenase family. Type 1 subfamily.

The protein resides in the cytoplasm. It catalyses the reaction N-acetyl-L-glutamate 5-semialdehyde + phosphate + NADP(+) = N-acetyl-L-glutamyl 5-phosphate + NADPH + H(+). Its pathway is amino-acid biosynthesis; L-arginine biosynthesis; N(2)-acetyl-L-ornithine from L-glutamate: step 3/4. Functionally, catalyzes the NADPH-dependent reduction of N-acetyl-5-glutamyl phosphate to yield N-acetyl-L-glutamate 5-semialdehyde. This chain is N-acetyl-gamma-glutamyl-phosphate reductase, found in Geobacillus thermodenitrificans (strain NG80-2).